Here is a 121-residue protein sequence, read N- to C-terminus: uncharacterized protein (121 aa).

77–84 (AALSFGKT) serves as a coordination point for ATP.

This is an uncharacterized protein from Saccharomyces cerevisiae (strain ATCC 204508 / S288c) (Baker's yeast).